Reading from the N-terminus, the 302-residue chain is N-acetyl-D-glucosamine kinase (302 aa).

Residues glycine 4 to lysine 11 and glycine 133 to tyrosine 140 each bind ATP. The Zn(2+) site is built by histidine 157, cysteine 177, cysteine 179, and cysteine 184.

It belongs to the ROK (NagC/XylR) family. NagK subfamily.

The enzyme catalyses N-acetyl-D-glucosamine + ATP = N-acetyl-D-glucosamine 6-phosphate + ADP + H(+). It functions in the pathway cell wall biogenesis; peptidoglycan recycling. Its function is as follows. Catalyzes the phosphorylation of N-acetyl-D-glucosamine (GlcNAc) derived from cell-wall degradation, yielding GlcNAc-6-P. In Vibrio atlanticus (strain LGP32) (Vibrio splendidus (strain Mel32)), this protein is N-acetyl-D-glucosamine kinase.